The following is a 308-amino-acid chain: Isoflavone reductase homolog (308 aa).

NADP(+) is bound by residues 11-17 (GGTGYIG), Arg-36, and Lys-45. The active-site Proton acceptor is the Lys-133. NADP(+) is bound at residue Arg-137.

It belongs to the NmrA-type oxidoreductase family. Isoflavone reductase subfamily.

It localises to the cytoplasm. The protein is Isoflavone reductase homolog of Solanum tuberosum (Potato).